The following is a 177-amino-acid chain: B9 domain-containing protein 2 (177 aa).

A C2 B9-type domain is found at 2 to 118 (AEVHIIGQIL…EIGTWKVAPN (117 aa)).

This sequence belongs to the B9D family. As to quaternary structure, probable component of the tectonic-like complex (also named MKS complex), composed of B9d1, B9d2, Cc2d2a, Mks1 and tctn. In terms of tissue distribution, expressed in chordotonal neurons in the antennae (at protein level). Expressed in spermatids (at protein level).

The protein localises to the cytoplasm. It localises to the cytoskeleton. Its subcellular location is the cilium basal body. In terms of biological role, probable component of the tectonic-like complex (also named MKS complex), a complex localized at the transition zone of primary cilia. Has a role in ciliary structure and function. This Drosophila melanogaster (Fruit fly) protein is B9 domain-containing protein 2.